The following is a 154-amino-acid chain: 6,7-dimethyl-8-ribityllumazine synthase (154 aa).

5-amino-6-(D-ribitylamino)uracil-binding positions include Phe-21, 55–57 (AFE), and 79–81 (CVI). 84-85 (AT) lines the (2S)-2-hydroxy-3-oxobutyl phosphate pocket. His-87 functions as the Proton donor in the catalytic mechanism. Phe-112 contributes to the 5-amino-6-(D-ribitylamino)uracil binding site. Arg-126 is a binding site for (2S)-2-hydroxy-3-oxobutyl phosphate.

The protein belongs to the DMRL synthase family. As to quaternary structure, forms an icosahedral capsid composed of 60 subunits, arranged as a dodecamer of pentamers.

It catalyses the reaction (2S)-2-hydroxy-3-oxobutyl phosphate + 5-amino-6-(D-ribitylamino)uracil = 6,7-dimethyl-8-(1-D-ribityl)lumazine + phosphate + 2 H2O + H(+). It functions in the pathway cofactor biosynthesis; riboflavin biosynthesis; riboflavin from 2-hydroxy-3-oxobutyl phosphate and 5-amino-6-(D-ribitylamino)uracil: step 1/2. Functionally, catalyzes the formation of 6,7-dimethyl-8-ribityllumazine by condensation of 5-amino-6-(D-ribitylamino)uracil with 3,4-dihydroxy-2-butanone 4-phosphate. This is the penultimate step in the biosynthesis of riboflavin. In Staphylococcus aureus (strain MRSA252), this protein is 6,7-dimethyl-8-ribityllumazine synthase.